The following is a 1045-amino-acid chain: E3 ubiquitin-protein ligase Topors (1045 aa).

Residues 1–35 (MGSQPPLGSPLSREEGEAPPPAPASEGRRRSRRVR) form a disordered region. The interval 1 to 195 (MGSQPPLGSP…RERNASVYSP (195 aa)) is E3 ubiquitin-protein ligase activity. Residues 51-374 (ELAASAPARP…MAAFDQHANY (324 aa)) are required for DNA-binding. Glycyl lysine isopeptide (Lys-Gly) (interchain with G-Cter in SUMO2) cross-links involve residues Lys-73, Lys-76, Lys-83, and Lys-88. Ser-98 bears the Phosphoserine mark. The RING-type zinc-finger motif lies at 103–142 (CPICLDRFDNVSYLDRCLHKFCFRCVQEWSKNKAECPLCK). Lys-159 is covalently cross-linked (Glycyl lysine isopeptide (Lys-Gly) (interchain with G-Cter in SUMO2)). Ser-194 carries the post-translational modification Phosphoserine. Residue Lys-249 forms a Glycyl lysine isopeptide (Lys-Gly) (interchain with G-Cter in SUMO2) linkage. Residues 437–574 (SLLNTSDSSD…STSLSSPRNL (138 aa)) are required for sumoylation and localization to discrete nuclear foci. Positions 437–654 (SLLNTSDSSD…RSRTRDSSWS (218 aa)) are interaction with SUMO1. Positions 442-475 (SDSSDEELVTGGATSQIQGVQTNDDLNNDSDDSS) are disordered. Residues 453-463 (GATSQIQGVQT) are compositionally biased toward polar residues. The interval 456-731 (SQIQGVQTND…RRTLSRAHYS (276 aa)) is interaction with p53/TP53. Positions 456 to 882 (SQIQGVQTND…GKATDTTKHH (427 aa)) are interaction with TOP1. Ser-499 is modified (phosphoserine). Positions 511 to 692 (ETVKTQEQEQ…RSRNRDRYYL (182 aa)) are disordered. Low complexity predominate over residues 521 to 534 (SYSSGDSDVSRCSS). Positions 539–565 (LGKDEQINKGHCDSSTRIKSKKEEKRS) are enriched in basic and acidic residues. Residue Lys-560 forms a Glycyl lysine isopeptide (Lys-Gly) (interchain with G-Cter in SUMO) linkage. Residues 566–578 (TSLSSPRNLNSSV) show a composition bias toward polar residues. Phosphoserine is present on Ser-585. 3 stretches are compositionally biased toward basic residues: residues 588-597 (NHRHRKRGRS), 613-630 (KNHR…KRSR), and 637-647 (PRGRRDKKRSR). The segment covering 654-669 (SRRSQTLSLSSESTSR) has biased composition (low complexity). Lys-701 is covalently cross-linked (Glycyl lysine isopeptide (Lys-Gly) (interchain with G-Cter in SUMO2)). Residues 713 to 936 (RDGYESSYRR…DNSGPQDPLQ (224 aa)) form a disordered region. Ser-718 bears the Phosphoserine; by PLK1 mark. The span at 721 to 730 (RRRTLSRAHY) shows a compositional bias: basic residues. Positions 731-747 (SRQSSSPEFRVQSFSER) are enriched in polar residues. Ser-734 carries the post-translational modification Phosphoserine. 2 stretches are compositionally biased toward basic and acidic residues: residues 755-766 (NHSERKYYYYER) and 816-825 (FASKAKDSHY). Glycyl lysine isopeptide (Lys-Gly) (interchain with G-Cter in SUMO2) cross-links involve residues Lys-819 and Lys-837. Residues 854-863 (KHKRRKRKTR) are compositionally biased toward basic residues. Positions 854–917 (KHKRRKRKTR…ITIDSDSDKD (64 aa)) are interaction with UBE2I. Phosphoserine occurs at positions 864 and 866. Positions 880–897 (KHHKKKKKKHKKKHKKHH) are enriched in basic residues. Phosphoserine is present on residues Ser-912, Ser-914, and Ser-1028. A compositionally biased stretch (basic and acidic residues) spans 913 to 923 (DSDKDSEVKED).

Interacts with PARK7/DJ-1. Interacts with TOP1. Interacts with p53/TP53; can both ubiquitinate and sumoylate p53/TP53. Interacts with the SUMO1 conjugating enzyme UBE2I. Interacts with SUMO1. Interacts with NKX3-1; polyubiquitinates NKX3-1 and induces its proteasomal degradation. Interacts with SIN3A; sumoylates SIN3A. Interacts with IKBKE; induced by DNA damage. Post-translationally, phosphorylation at Ser-98 regulates the E3 ubiquitin-protein ligase activity but not the SUMO1-protein ligase activity. Phosphorylation at Ser-718 increases the E3 ubiquitin-protein ligase activity versus the SUMO1-protein ligase activity resulting in increased p53/TP53 ubiquitination and degradation. Sumoylated. In terms of tissue distribution, expressed at highest levels in testis and at lower levels in adrenal gland, bone marrow, brain, colon, heart, kidney, liver, muscle, ovary, pancreas, placenta, prostate, skeletal muscle, skin, small intestine, spleen, stomach, testis, thymus, thyroid and uterus. Expressed in the alveolar epithelium of the lung. Expression is commonly decreased in colon adenocarcinomas and lung cancers.

It is found in the nucleus. The protein localises to the PML body. It carries out the reaction S-ubiquitinyl-[E2 ubiquitin-conjugating enzyme]-L-cysteine + [acceptor protein]-L-lysine = [E2 ubiquitin-conjugating enzyme]-L-cysteine + N(6)-ubiquitinyl-[acceptor protein]-L-lysine.. Its function is as follows. Functions as an E3 ubiquitin-protein ligase and as an E3 SUMO1-protein ligase. Probable tumor suppressor involved in cell growth, cell proliferation and apoptosis that regulates p53/TP53 stability through ubiquitin-dependent degradation. May regulate chromatin modification through sumoylation of several chromatin modification-associated proteins. May be involved in DNA damage-induced cell death through IKBKE sumoylation. In Homo sapiens (Human), this protein is E3 ubiquitin-protein ligase Topors (TOPORS).